The sequence spans 373 residues: NAD(P)H-quinone oxidoreductase subunit 1 (373 aa).

The next 8 helical transmembrane spans lie at 28-48 (LLWLPLPMLLVLVAAVVGVLV), 98-118 (LLFTLGPVLVVVPVIISWLII), 129-149 (VGVGIFLWISFSSIQPIGLLM), 177-197 (LALAVLAIVMMTNSLSTVDIV), 205-225 (ILSWNIWRQPVGFLIFWICAL), 267-287 (VLSAVLVSVLYLGGWGFPIPV), 309-329 (TVGIVMTVLKAYLLVFVAILL), and 348-368 (FLLPLSLVNLLVTAALKLAFP).

This sequence belongs to the complex I subunit 1 family. In terms of assembly, NDH-1 is composed of at least 11 different subunits.

The protein resides in the cellular thylakoid membrane. It catalyses the reaction a plastoquinone + NADH + (n+1) H(+)(in) = a plastoquinol + NAD(+) + n H(+)(out). The enzyme catalyses a plastoquinone + NADPH + (n+1) H(+)(in) = a plastoquinol + NADP(+) + n H(+)(out). NDH-1 shuttles electrons from an unknown electron donor, via FMN and iron-sulfur (Fe-S) centers, to quinones in the respiratory and/or the photosynthetic chain. The immediate electron acceptor for the enzyme in this species is believed to be plastoquinone. Couples the redox reaction to proton translocation, and thus conserves the redox energy in a proton gradient. The chain is NAD(P)H-quinone oxidoreductase subunit 1 from Synechococcus sp. (strain CC9605).